A 474-amino-acid chain; its full sequence is A-type ATP synthase subunit B (474 aa).

Belongs to the ATPase alpha/beta chains family. As to quaternary structure, has multiple subunits with at least A(3), B(3), C, D, E, F, H, I and proteolipid K(x).

The protein localises to the cell membrane. Its function is as follows. Component of the A-type ATP synthase that produces ATP from ADP in the presence of a proton gradient across the membrane. The B chain is a regulatory subunit. The polypeptide is A-type ATP synthase subunit B (Halorubrum lacusprofundi (strain ATCC 49239 / DSM 5036 / JCM 8891 / ACAM 34)).